The primary structure comprises 621 residues: Microbial serine proteinase (621 aa).

Residues 1–24 (MRKTSLALAISALLSALPIASVQA) form the signal peptide. One can recognise a Peptidase S8 domain in the interval 68-440 (PRGGMAGNDL…FGLVDVNKTQ (373 aa)). The Charge relay system role is filled by aspartate 98. Residues 114-133 (PGSKNVVTGGSDPTPTDPDR) form a disordered region. Catalysis depends on charge relay system residues histidine 137 and serine 354. The 166-residue stretch at 454–619 (AVALAKGKGN…GYSVLGHDAA (166 aa)) folds into the P/Homo B domain. The interval 457-485 (LAKGKGNGRSPSAPSRYVGSSPTRSSTQV) is disordered. The span at 465–485 (RSPSAPSRYVGSSPTRSSTQV) shows a compositional bias: polar residues.

Belongs to the peptidase S8 family.

In terms of biological role, agent of furonculosis. The protein is Microbial serine proteinase (aspA) of Aeromonas salmonicida.